The chain runs to 388 residues: Succinate--CoA ligase [ADP-forming] subunit beta (388 aa).

The ATP-grasp domain maps to 9-244 (KEIFRSMGVA…LEEEDPKEIE (236 aa)). ATP is bound by residues Lys46, 53 to 55 (GRG), Glu99, Cys102, and Glu107. Asn199 and Asp213 together coordinate Mg(2+). Residues Asn264 and 321–323 (GIM) contribute to the substrate site.

The protein belongs to the succinate/malate CoA ligase beta subunit family. In terms of assembly, heterotetramer of two alpha and two beta subunits. Requires Mg(2+) as cofactor.

It carries out the reaction succinate + ATP + CoA = succinyl-CoA + ADP + phosphate. It catalyses the reaction GTP + succinate + CoA = succinyl-CoA + GDP + phosphate. Its pathway is carbohydrate metabolism; tricarboxylic acid cycle; succinate from succinyl-CoA (ligase route): step 1/1. Functionally, succinyl-CoA synthetase functions in the citric acid cycle (TCA), coupling the hydrolysis of succinyl-CoA to the synthesis of either ATP or GTP and thus represents the only step of substrate-level phosphorylation in the TCA. The beta subunit provides nucleotide specificity of the enzyme and binds the substrate succinate, while the binding sites for coenzyme A and phosphate are found in the alpha subunit. The sequence is that of Succinate--CoA ligase [ADP-forming] subunit beta from Staphylococcus haemolyticus (strain JCSC1435).